An 898-amino-acid chain; its full sequence is Interleukin enhancer-binding factor 3 (898 aa).

One can recognise a DZF domain in the interval 5 to 378 (RIFVNDDRHV…PMKRPMEEDG (374 aa)). Positions 52–85 (QEKGNSELSEAENMDTPPDDESKEGAGEQKAEHM) are disordered. Residues 60–73 (SEAENMDTPPDDES) are compositionally biased toward acidic residues. Thr67 is subject to Phosphothreonine. Over residues 74–85 (KEGAGEQKAEHM) the composition is skewed to basic and acidic residues. An N6-acetyllysine modification is found at Lys100. Phosphothreonine; by PKR is present on Thr188. Position 190 is a phosphoserine (Ser190). Lys297 participates in a covalent cross-link: Glycyl lysine isopeptide (Lys-Gly) (interchain with G-Cter in ubiquitin). A Phosphothreonine; by PKR modification is found at Thr315. Lys348 is covalently cross-linked (Glycyl lysine isopeptide (Lys-Gly) (interchain with G-Cter in SUMO1)). A disordered region spans residues 363 to 402 (TTYAITPMKRPMEEDGEEKSPSKKKKKIQKKEEKADPPQA). The Bipartite nuclear localization signal motif lies at 371–389 (KRPMEEDGEEKSPSKKKKK). Residues 372 to 383 (RPMEEDGEEKSP) are compositionally biased toward basic and acidic residues. Residues Ser382 and Ser384 each carry the phosphoserine modification. A Glycyl lysine isopeptide (Lys-Gly) (interchain with G-Cter in SUMO2) cross-link involves residue Lys396. Residues 398–467 (DPPQAMNALM…AVKVLQDMGL (70 aa)) form the DRBM 1 domain. N6-acetyllysine is present on Lys460. 2 disordered regions span residues 466–495 (GLPT…IVAP) and 505–524 (PSSV…LTKH). A compositionally biased stretch (basic and acidic residues) spans 472-481 (EGRDSSKGED). Phosphoserine occurs at positions 476, 477, 482, and 486. A Glycyl lysine isopeptide (Lys-Gly) (interchain with G-Cter in SUMO2) cross-link involves residue Lys489. The DRBM 2 domain occupies 524 to 590 (HGKNPVMELN…ALAALEKLFP (67 aa)). Phosphothreonine is present on Thr592. The interaction with PRMT1 stretch occupies residues 609-898 (RGGPKFAAKP…TEHSMNYQYR (290 aa)). Disordered regions lie at residues 631-661 (NEVP…GGAN) and 719-898 (QGDS…YQYR). The span at 644–661 (RGGNIRGRGRGRGFGGAN) shows a compositional bias: gly residues. Low complexity-rich tracts occupy residues 745–769 (SYSS…SSYG), 783–794 (GSYSSYSNSYNS), and 802–812 (DYSYDSKFNYS). Phosphoserine is present on residues Ser794, Ser812, Ser814, and Ser818. Over residues 813 to 822 (GSGGRSGGNS) the composition is skewed to gly residues. The span at 823 to 834 (YGSSGSSSYNTG) shows a compositional bias: low complexity. A compositionally biased stretch (gly residues) spans 835–845 (SHGGYGTGSGG). Residues 846-886 (SSSYQGKQGGYSSQSNYSSPGSSQSYSGPASSYQSSQGGYS) are compositionally biased toward low complexity.

As to quaternary structure, identified in a IGF2BP1-dependent mRNP granule complex containing untranslated mRNAs. Interacts with FUS and SMN. Interacts (via C-terminus) with PRMT1. Forms a complex with ILF2. Can also bind to PRKDC/XRCC7: this may stabilize the interaction of PRKDC/XRCC7 and the heterodimeric complex of XRCC6/KU70 and XRCC5/KU80. Forms a heteromeric complex with ZNF346 and ILF3. Found in a nuclear export complex with XPO5, ILF3, Ran and double-stranded RNA or double-stranded minihelix VA1 RNA. Found in a nuclear export complex with XPO5, RAN, ILF3, ZNF346 and double-stranded RNA. Interacts with XPO5 and ZNF346. Forms a complex with ILF2, YLPM1, KHDRBS1, RBMX, NCOA5 and PPP1CA. Interacts with AGO1 and AGO2. Interacts with DHX36; this interaction occurs in a RNA-dependent manner. Interacts with ELAVL1; this interaction occurs in a RNA-dependent manner. Interacts with HAVCR2; this interaction promotes ILF3 ubiquitination and subsequent degradation. In terms of processing, phosphorylated at Thr-188 and Thr-315 by PKR in response to RNA viruses. This phosphorylation results in the dissociation of ILF2 from the ILF2-ILF3 complex resulting in a cytoplasmic sequestration of ILF3 where it can bind to viral RNAs and impede viral replication. Methylated by protein arginine N-methyltransferase 1. In terms of tissue distribution, ubiquitous. Expressed at high levels in the thymus, testis, ovary and at lower levelss in the spleen.

The protein localises to the nucleus. It localises to the nucleolus. Its subcellular location is the cytoplasm. Functionally, RNA-binding protein that plays an essential role in the biogenesis of circular RNAs (circRNAs) which are produced by back-splicing circularization of pre-mRNAs. Within the nucleus, promotes circRNAs processing by stabilizing the regulatory elements residing in the flanking introns of the circularized exons. Plays thereby a role in the back-splicing of a subset of circRNAs. As a consequence, participates in a wide range of transcriptional and post-transcriptional processes. Binds to poly-U elements and AU-rich elements (AREs) in the 3'-UTR of target mRNAs. Upon viral infection, ILF3 accumulates in the cytoplasm and participates in the innate antiviral response. Mechanistically, ILF3 becomes phosphorylated and activated by the double-stranded RNA-activated protein kinase/PKR which releases ILF3 from cellular mature circRNAs. In turn, unbound ILF3 molecules are able to interact with and thus inhibit viral mRNAs. The protein is Interleukin enhancer-binding factor 3 (Ilf3) of Mus musculus (Mouse).